The primary structure comprises 106 residues: ATP-dependent Clp protease adapter protein ClpS (106 aa).

The protein belongs to the ClpS family. Binds to the N-terminal domain of the chaperone ClpA.

Functionally, involved in the modulation of the specificity of the ClpAP-mediated ATP-dependent protein degradation. This Escherichia coli O139:H28 (strain E24377A / ETEC) protein is ATP-dependent Clp protease adapter protein ClpS.